The primary structure comprises 414 residues: L-cysteine:1D-myo-inositol 2-amino-2-deoxy-alpha-D-glucopyranoside ligase (414 aa).

The disordered stretch occupies residues 1 to 38 (MRSWPAPEVPNLPEAGLPGPALPLHLHDTATGTVRPTR). Residues 11 to 38 (NLPEAGLPGPALPLHLHDTATGTVRPTR) show a composition bias toward low complexity. Cysteine 48 is a Zn(2+) binding site. L-cysteinyl-5'-AMP is bound by residues 48–51 (CGIT), threonine 63, and 86–88 (NVT). Residues 50-60 (ITPYDATHLGH) carry the 'HIGH' region motif. Positions 188–193 (ERGGDP) match the 'ERGGDP' region motif. Residue tryptophan 228 participates in L-cysteinyl-5'-AMP binding. Position 232 (cysteine 232) interacts with Zn(2+). L-cysteinyl-5'-AMP is bound at residue 250-252 (GSD). Histidine 257 contributes to the Zn(2+) binding site. An L-cysteinyl-5'-AMP-binding site is contributed by valine 284. The 'KMSKS' region signature appears at 290–294 (KMSKS).

It belongs to the class-I aminoacyl-tRNA synthetase family. MshC subfamily. As to quaternary structure, monomer. Requires Zn(2+) as cofactor.

It carries out the reaction 1D-myo-inositol 2-amino-2-deoxy-alpha-D-glucopyranoside + L-cysteine + ATP = 1D-myo-inositol 2-(L-cysteinylamino)-2-deoxy-alpha-D-glucopyranoside + AMP + diphosphate + H(+). In terms of biological role, catalyzes the ATP-dependent condensation of GlcN-Ins and L-cysteine to form L-Cys-GlcN-Ins. The chain is L-cysteine:1D-myo-inositol 2-amino-2-deoxy-alpha-D-glucopyranoside ligase from Thermomonospora curvata (strain ATCC 19995 / DSM 43183 / JCM 3096 / KCTC 9072 / NBRC 15933 / NCIMB 10081 / Henssen B9).